The sequence spans 86 residues: Large ribosomal subunit protein bL31 (86 aa).

This sequence belongs to the bacterial ribosomal protein bL31 family. Type A subfamily. As to quaternary structure, part of the 50S ribosomal subunit.

Functionally, binds the 23S rRNA. This chain is Large ribosomal subunit protein bL31, found in Parasynechococcus marenigrum (strain WH8102).